We begin with the raw amino-acid sequence, 729 residues long: Neurochondrin (729 aa).

S2 carries the N-acetylserine modification. S2 carries the phosphoserine modification. S-palmitoyl cysteine attachment occurs at residues C3 and C4. R75 is subject to Asymmetric dimethylarginine. Phosphoserine is present on S448.

Belongs to the neurochondrin family. As to quaternary structure, interacts with MCHR1. Interacts with SEMA4C. Interacts with DIAPH1 (via FH3 domain). Interacts with GRM5. Post-translationally, palmitoylated. Palmitoylation by ZDHHC1, ZDHHC3 and ZDHHC11 regulates the association of NCDN with endosome membranes. May also be palmitoylated by ZDHHC7. In terms of tissue distribution, expressed in brain and in peripheral nervous system (at protein level). Weakly expressed in neurites.

It is found in the cytoplasm. The protein resides in the cytosol. It localises to the endosome membrane. The protein localises to the cell projection. Its subcellular location is the dendrite. It is found in the postsynapse. Functionally, probably involved in signal transduction, in the nervous system, via increasing cell surface localization of GRM5 and positively regulating its signaling. Required for the spatial learning process. Acts as a negative regulator of Ca(2+)-calmodulin-dependent protein kinase 2 (CaMK2) phosphorylation. May play a role in modulating melanin-concentrating hormone-mediated functions via its interaction with MCHR1 that interferes with G protein-coupled signal transduction. May be involved in bone metabolism. May also be involved in neurite outgrowth. The sequence is that of Neurochondrin (Ncdn) from Rattus norvegicus (Rat).